A 151-amino-acid polypeptide reads, in one-letter code: HTH-type transcriptional regulator TcaR (151 aa).

The 142-residue stretch at 1-142 folds into the HTH marR-type domain; that stretch reads MVKHLQDHIQ…VRQVLEVINH (142 aa). A DNA-binding region (H-T-H motif) is located at residues 54 to 77; the sequence is ISEITQRQGVNKAAVSRRIKKLID.

Involved in the antibiotic teicoplanin susceptibility. Inactivation of the tcaRAB operon leads to teicoplanin resistance. Its function is as follows. Is a weak negative regulator of transcription of the icaABD operon. This is HTH-type transcriptional regulator TcaR (tcaR) from Staphylococcus aureus (strain COL).